A 311-amino-acid polypeptide reads, in one-letter code: Coproporphyrin III ferrochelatase 1 (311 aa).

Residues Y12, R29, 45–46, S53, and Y124 contribute to the Fe-coproporphyrin III site; that span reads RY. Residues H182 and E263 each contribute to the Fe(2+) site.

It belongs to the ferrochelatase family.

It is found in the cytoplasm. The enzyme catalyses Fe-coproporphyrin III + 2 H(+) = coproporphyrin III + Fe(2+). It participates in porphyrin-containing compound metabolism; protoheme biosynthesis. Its function is as follows. Involved in coproporphyrin-dependent heme b biosynthesis. Catalyzes the insertion of ferrous iron into coproporphyrin III to form Fe-coproporphyrin III. This is Coproporphyrin III ferrochelatase 1 from Bacillus cereus (strain ATCC 14579 / DSM 31 / CCUG 7414 / JCM 2152 / NBRC 15305 / NCIMB 9373 / NCTC 2599 / NRRL B-3711).